A 278-amino-acid polypeptide reads, in one-letter code: HTH-type transcriptional activator RhaS (278 aa).

Positions 174 to 272 (NQLMAWLEDH…NWSPRDIRQG (99 aa)) constitute an HTH araC/xylS-type domain. 2 consecutive DNA-binding regions (H-T-H motif) follow at residues 191 to 212 (EAVAEQFSLSLRTLHRQLKQHT) and 239 to 262 (VTEIAYRCGFGDSNHFSTLFRREF).

Binds DNA as a dimer.

It is found in the cytoplasm. Activates expression of the rhaBAD and rhaT operons. This chain is HTH-type transcriptional activator RhaS, found in Salmonella arizonae (strain ATCC BAA-731 / CDC346-86 / RSK2980).